We begin with the raw amino-acid sequence, 243 residues long: 1-(5-phosphoribosyl)-5-[(5-phosphoribosylamino)methylideneamino] imidazole-4-carboxamide isomerase (243 aa).

D8 acts as the Proton acceptor in catalysis. D130 serves as the catalytic Proton donor.

It belongs to the HisA/HisF family.

The protein resides in the cytoplasm. It carries out the reaction 1-(5-phospho-beta-D-ribosyl)-5-[(5-phospho-beta-D-ribosylamino)methylideneamino]imidazole-4-carboxamide = 5-[(5-phospho-1-deoxy-D-ribulos-1-ylimino)methylamino]-1-(5-phospho-beta-D-ribosyl)imidazole-4-carboxamide. Its pathway is amino-acid biosynthesis; L-histidine biosynthesis; L-histidine from 5-phospho-alpha-D-ribose 1-diphosphate: step 4/9. The chain is 1-(5-phosphoribosyl)-5-[(5-phosphoribosylamino)methylideneamino] imidazole-4-carboxamide isomerase from Methylococcus capsulatus (strain ATCC 33009 / NCIMB 11132 / Bath).